The primary structure comprises 225 residues: Uracil-DNA glycosylase (225 aa).

Residue Asp65 is the Proton acceptor of the active site.

Belongs to the uracil-DNA glycosylase (UDG) superfamily. UNG family.

Its subcellular location is the cytoplasm. It catalyses the reaction Hydrolyzes single-stranded DNA or mismatched double-stranded DNA and polynucleotides, releasing free uracil.. Functionally, excises uracil residues from the DNA which can arise as a result of misincorporation of dUMP residues by DNA polymerase or due to deamination of cytosine. The polypeptide is Uracil-DNA glycosylase (Bacillus cereus (strain G9842)).